A 619-amino-acid chain; its full sequence is MPAYRSRTTTHGRNMAGARGLWRATGMKDSDFGKPIIAVVNSFTQFVPGHVHLKDLGQLVAREIEAAGGVAKEFNTIAVDDGIAMGHDGMLYSLPSRELIADSVEYMVNAHCADAMVCISNCDKITPGMLMAAMRLNIPAVFVSGGPMEAGKVVLKGKTHAVDLIDAMVAAADSSMSDEDVQTMERSACPTCGSCSGMFTANSMNCLAEALGLALPGNGSVLATHADRKRLFVEAGHTIVDLARRYYEGDDESVLPRKVASFEAFENAMTLDIAMGGSTNTVLHLLAAAREAELDFSMKDIDRLSRKVPCLSKIAPSVSDVHMEDVHRAGGIMAILGELDRAGLIHNSCPTVHSETLGAALARWDIRQSNSEAVRTFYRAAPGGVPTQVAFSQDRRYDELDLDRQKGVIRDAEHAFSKDGGLAVLYGNIALDGCIVKTAGVDASILTFSGPAKVFESQDDAVSAILGNKIVAGDVIVIRYEGPRGGPGMQEMLYPTSYLKSKGLGKACALITDGRFSGGTSGLSIGHVSPEAAEGGLIGLVRNGDRISIDIPNRGITLDVAADELSRRAEEEEAKGDKAWQPKDRKRKVSAALQAYAMLTTSAANGAVRDVNRRLGKGK.

A Mg(2+)-binding site is contributed by Asp-81. Cys-122 is a binding site for [2Fe-2S] cluster. Residues Asp-123 and Lys-124 each contribute to the Mg(2+) site. N6-carboxylysine is present on Lys-124. Cys-195 serves as a coordination point for [2Fe-2S] cluster. Glu-491 serves as a coordination point for Mg(2+). Ser-517 functions as the Proton acceptor in the catalytic mechanism.

The protein belongs to the IlvD/Edd family. As to quaternary structure, homodimer. It depends on [2Fe-2S] cluster as a cofactor. Mg(2+) is required as a cofactor.

The enzyme catalyses (2R)-2,3-dihydroxy-3-methylbutanoate = 3-methyl-2-oxobutanoate + H2O. It carries out the reaction (2R,3R)-2,3-dihydroxy-3-methylpentanoate = (S)-3-methyl-2-oxopentanoate + H2O. It functions in the pathway amino-acid biosynthesis; L-isoleucine biosynthesis; L-isoleucine from 2-oxobutanoate: step 3/4. It participates in amino-acid biosynthesis; L-valine biosynthesis; L-valine from pyruvate: step 3/4. Its function is as follows. Functions in the biosynthesis of branched-chain amino acids. Catalyzes the dehydration of (2R,3R)-2,3-dihydroxy-3-methylpentanoate (2,3-dihydroxy-3-methylvalerate) into 2-oxo-3-methylpentanoate (2-oxo-3-methylvalerate) and of (2R)-2,3-dihydroxy-3-methylbutanoate (2,3-dihydroxyisovalerate) into 2-oxo-3-methylbutanoate (2-oxoisovalerate), the penultimate precursor to L-isoleucine and L-valine, respectively. The polypeptide is Dihydroxy-acid dehydratase (Rhodopseudomonas palustris (strain HaA2)).